A 360-amino-acid polypeptide reads, in one-letter code: Peptide chain release factor 1 (360 aa).

An N5-methylglutamine modification is found at Gln235. The interval 281–310 (AERQRQDAAQAESRRLQVGSGDRSQRIRTY) is disordered.

The protein belongs to the prokaryotic/mitochondrial release factor family. In terms of processing, methylated by PrmC. Methylation increases the termination efficiency of RF1.

It is found in the cytoplasm. Peptide chain release factor 1 directs the termination of translation in response to the peptide chain termination codons UAG and UAA. The protein is Peptide chain release factor 1 of Stenotrophomonas maltophilia (strain R551-3).